The chain runs to 231 residues: MSMLYYTLLIAILISVQAAPKTKDHAPARSSAKSRIPHHTHRTKSLHHSHGKLEAKEPSYFRNVTVDPKLFRKRKFRSPRVLFSTQPPPLSEDFQHLEYLDDEESLNKTIRAKRTVHPVLHKGEYSVCDSVSMWVGEKTKATDIKGKEVTVLGEVNINNSVFKQYFFETKCRDPKPVSSGCRGIDAKHWNSYCTTTHTFVKALTMEGKQAAWRFIRIDTACVCVLSRKGRT.

Positions 1–18 (MSMLYYTLLIAILISVQA) are cleaved as a signal peptide. The propeptide occupies 19–114 (APKTKDHAPA…SLNKTIRAKR (96 aa)). The interval 24 to 53 (DHAPARSSAKSRIPHHTHRTKSLHHSHGKL) is disordered. Residues 35–50 (RIPHHTHRTKSLHHSH) show a composition bias toward basic residues. N-linked (GlcNAc...) asparagine glycans are attached at residues Asn63, Asn107, and Asn158. 3 disulfide bridges follow: Cys128-Cys193, Cys171-Cys221, and Cys181-Cys223.

The protein belongs to the NGF-beta family. Homodimer.

The protein resides in the secreted. Nerve growth factor is important for the development and maintenance of the sympathetic and sensory nervous systems. It stimulates division and differentiation of sympathetic and embryonic sensory neurons. This chain is Nerve growth factor (ngf), found in Xenopus laevis (African clawed frog).